Here is a 431-residue protein sequence, read N- to C-terminus: Ribosomal RNA small subunit methyltransferase B (431 aa).

S-adenosyl-L-methionine contacts are provided by residues 254–260 (CAAPGGK), Asp-277, Asp-303, and Asp-322. Residue Cys-375 is the Nucleophile of the active site.

Belongs to the class I-like SAM-binding methyltransferase superfamily. RsmB/NOP family.

It localises to the cytoplasm. The enzyme catalyses cytidine(967) in 16S rRNA + S-adenosyl-L-methionine = 5-methylcytidine(967) in 16S rRNA + S-adenosyl-L-homocysteine + H(+). Specifically methylates the cytosine at position 967 (m5C967) of 16S rRNA. The chain is Ribosomal RNA small subunit methyltransferase B from Klebsiella pneumoniae subsp. pneumoniae (strain ATCC 700721 / MGH 78578).